The chain runs to 366 residues: Chorismate synthase (366 aa).

Residues arginine 48 and arginine 54 each coordinate NADP(+). FMN-binding positions include 125–127 (RSS), 238–239 (NA), glycine 278, 293–297 (KPTSS), and arginine 319.

This sequence belongs to the chorismate synthase family. Homotetramer. FMNH2 is required as a cofactor.

The catalysed reaction is 5-O-(1-carboxyvinyl)-3-phosphoshikimate = chorismate + phosphate. It functions in the pathway metabolic intermediate biosynthesis; chorismate biosynthesis; chorismate from D-erythrose 4-phosphate and phosphoenolpyruvate: step 7/7. Its function is as follows. Catalyzes the anti-1,4-elimination of the C-3 phosphate and the C-6 proR hydrogen from 5-enolpyruvylshikimate-3-phosphate (EPSP) to yield chorismate, which is the branch point compound that serves as the starting substrate for the three terminal pathways of aromatic amino acid biosynthesis. This reaction introduces a second double bond into the aromatic ring system. This is Chorismate synthase from Paraburkholderia phymatum (strain DSM 17167 / CIP 108236 / LMG 21445 / STM815) (Burkholderia phymatum).